We begin with the raw amino-acid sequence, 193 residues long: Ganglioside GM2 activator (193 aa).

An N-terminal signal peptide occupies residues Met-1–Pro-20. 4 cysteine pairs are disulfide-bonded: Cys-39-Cys-183, Cys-99-Cys-106, Cys-112-Cys-138, and Cys-125-Cys-136. Asn-151 is a glycosylation site (N-linked (GlcNAc...) asparagine).

As to expression, widely expressed. Most abundant in kidney and testis.

Its subcellular location is the lysosome. The enzyme catalyses cholesterol(in) = cholesterol(out). In terms of biological role, binds gangliosides and stimulates ganglioside GM2 degradation. It stimulates only the breakdown of ganglioside GM2 and glycolipid GA2 by beta-hexosaminidase A. It extracts single GM2 molecules from membranes and presents them in soluble form to beta-hexosaminidase A for cleavage of N-acetyl-D-galactosamine and conversion to GM3. The large binding pocket can accommodate several single chain phospholipids and fatty acids, GM2A also exhibits some calcium-independent phospholipase activity. Has cholesterol transfer activity. In Mus musculus (Mouse), this protein is Ganglioside GM2 activator.